Consider the following 356-residue polypeptide: MKKSKLVVALAAILSCAAIPTTVMAESNVQQTMEKSNMSEAKKDLHEIYLAGGCFWGIEAYMERIYGVEDAISGYANGKSDKTNYQKIGITDHAETVKVTYDRNKVSLDKLLKYYFQVIDPTSVNKQGNDRGRQYRTGIYYQDTADKSIIEKEITALQGKYKNKIQIEVEPLHNYIVAEEYHQDYLKKNPNGYCHIDLEQANYVIIDEKDYPKPSDAELKAKLTPLQYSVTQNKNTEHSFSNEYWDNFKPGIYVDVTTGEPLFSSKDKFESGCGWPSFTKPITKEVVTYQDDHSFNMLRTEVISRSGKAHLGHVFDDGPKDKGGLRYCINSAAVKFIPLEDMVKENYGYLTNAVKE.

The interval 46–199 (HEIYLAGGCF…PNGYCHIDLE (154 aa)) is peptide methionine sulfoxide reductase A. Cys54 is an active-site residue. The 124-residue stretch at 216 to 339 (DAELKAKLTP…NSAAVKFIPL (124 aa)) folds into the MsrB domain. The Nucleophile role is filled by Cys328.

It in the N-terminal section; belongs to the MsrA Met sulfoxide reductase family. In the C-terminal section; belongs to the MsrB Met sulfoxide reductase family.

The enzyme catalyses L-methionyl-[protein] + [thioredoxin]-disulfide + H2O = L-methionyl-(S)-S-oxide-[protein] + [thioredoxin]-dithiol. It carries out the reaction [thioredoxin]-disulfide + L-methionine + H2O = L-methionine (S)-S-oxide + [thioredoxin]-dithiol. The catalysed reaction is L-methionyl-[protein] + [thioredoxin]-disulfide + H2O = L-methionyl-(R)-S-oxide-[protein] + [thioredoxin]-dithiol. Its function is as follows. Has an important function as a repair enzyme for proteins that have been inactivated by oxidation. Catalyzes the reversible oxidation-reduction of methionine sulfoxide in proteins to methionine. The protein is Peptide methionine sulfoxide reductase MsrA/MsrB (msrAB) of Aggregatibacter actinomycetemcomitans (Actinobacillus actinomycetemcomitans).